The primary structure comprises 31 residues: Photosystem II reaction center protein T (31 aa).

Residues 3-23 form a helical membrane-spanning segment; that stretch reads SVAYIVVLTMALAVLFFAIAF.

This sequence belongs to the PsbT family. In terms of assembly, PSII is composed of 1 copy each of membrane proteins PsbA, PsbB, PsbC, PsbD, PsbE, PsbF, PsbH, PsbI, PsbJ, PsbK, PsbL, PsbM, PsbT, PsbX, PsbY, PsbZ, Psb30/Ycf12, peripheral proteins PsbO, CyanoQ (PsbQ), PsbU, PsbV and a large number of cofactors. It forms dimeric complexes.

The protein localises to the cellular thylakoid membrane. In terms of biological role, found at the monomer-monomer interface of the photosystem II (PS II) dimer, plays a role in assembly and dimerization of PSII. PSII is a light-driven water plastoquinone oxidoreductase, using light energy to abstract electrons from H(2)O, generating a proton gradient subsequently used for ATP formation. This chain is Photosystem II reaction center protein T, found in Crocosphaera subtropica (strain ATCC 51142 / BH68) (Cyanothece sp. (strain ATCC 51142)).